We begin with the raw amino-acid sequence, 225 residues long: Insulin-induced gene 2 protein (225 aa).

The Cytoplasmic portion of the chain corresponds to 1–28 (MAENDAKPTLPKKSGPYISSVTSHGMNL). Residues 29–51 (VIRGIVLFFIGVFLALVLNLLQI) form a helical membrane-spanning segment. Residues 52-70 (QRNVTLFPPDVITSIFSSA) lie on the Lumenal side of the membrane. Residues 71 to 88 (WWVPPCCGTASAVIGLLY) form a helical membrane-spanning segment. Over 89–103 (PCMDRHLGEPHKFKR) the chain is Cytoplasmic. A helical transmembrane segment spans residues 104–126 (EWSSVMRCVAVFVGINHASAKVD). Topologically, residues 127–129 (FAN) are lumenal. The helical transmembrane segment at 130–148 (NIQLSLTLAALSIGLWWTF) threads the bilayer. At 149–153 (DRSRS) the chain is on the cytoplasmic side. Residues 154-175 (GFGLGVGIAFLATLVSQLLVYN) traverse the membrane as a helical segment. The Lumenal segment spans residues 176 to 189 (GVYQYTSPDFLYVR). Residues 190-207 (SWLPCIFFAGGITMGNIG) traverse the membrane as a helical segment. Residues 208–225 (RQLAMYECKVIAEKSHED) are Cytoplasmic-facing. Positions 219-225 (AEKSHED) match the KxHxx motif.

This sequence belongs to the INSIG family. As to quaternary structure, interacts with SCAP; interaction is direct and only takes place in the presence of sterols; it prevents interaction between SCAP and the coat protein complex II (COPII). Associates with the SCAP-SREBP complex; association is mediated via its interaction with SCAP and only takes place in the presence of sterols.

It is found in the endoplasmic reticulum membrane. In terms of biological role, oxysterol-binding protein that mediates feedback control of cholesterol synthesis by controlling both endoplasmic reticulum to Golgi transport of SCAP and degradation of HMGCR. Acts as a negative regulator of cholesterol biosynthesis by mediating the retention of the SCAP-SREBP complex in the endoplasmic reticulum, thereby blocking the processing of sterol regulatory element-binding proteins (SREBPs). Binds oxysterol, including 22-hydroxycholesterol, 24-hydroxycholesterol, 25-hydroxycholesterol and 27-hydroxycholesterol, regulating interaction with SCAP and retention of the SCAP-SREBP complex in the endoplasmic reticulum. In presence of oxysterol, interacts with SCAP, retaining the SCAP-SREBP complex in the endoplasmic reticulum, thereby preventing SCAP from escorting SREBPs to the Golgi. Sterol deprivation reduces oxysterol-binding, disrupting the interaction between INSIG2 and SCAP, thereby promoting Golgi transport of the SCAP-SREBP complex, followed by processing and nuclear translocation of SREBPs. Also regulates cholesterol synthesis by regulating degradation of HMGCR. The chain is Insulin-induced gene 2 protein from Gallus gallus (Chicken).